The following is a 229-amino-acid chain: Cytochrome c oxidase subunit 2 (229 aa).

Topologically, residues M1–H26 are mitochondrial intermembrane. A helical transmembrane segment spans residues A27–N48. The Mitochondrial matrix segment spans residues S49–E62. The chain crosses the membrane as a helical span at residues M63 to R82. The Mitochondrial intermembrane portion of the chain corresponds to L83–S229. Cu cation-binding residues include H161, C196, E198, C200, H204, and M207. E198 contributes to the Mg(2+) binding site.

This sequence belongs to the cytochrome c oxidase subunit 2 family. In terms of assembly, component of the cytochrome c oxidase (complex IV, CIV), a multisubunit enzyme composed of a catalytic core of 3 subunits and several supernumerary subunits. The complex exists as a monomer or a dimer and forms supercomplexes (SCs) in the inner mitochondrial membrane with ubiquinol-cytochrome c oxidoreductase (cytochrome b-c1 complex, complex III, CIII). It depends on Cu cation as a cofactor.

Its subcellular location is the mitochondrion inner membrane. It catalyses the reaction 4 Fe(II)-[cytochrome c] + O2 + 8 H(+)(in) = 4 Fe(III)-[cytochrome c] + 2 H2O + 4 H(+)(out). Functionally, component of the cytochrome c oxidase, the last enzyme in the mitochondrial electron transport chain which drives oxidative phosphorylation. The respiratory chain contains 3 multisubunit complexes succinate dehydrogenase (complex II, CII), ubiquinol-cytochrome c oxidoreductase (cytochrome b-c1 complex, complex III, CIII) and cytochrome c oxidase (complex IV, CIV), that cooperate to transfer electrons derived from NADH and succinate to molecular oxygen, creating an electrochemical gradient over the inner membrane that drives transmembrane transport and the ATP synthase. Cytochrome c oxidase is the component of the respiratory chain that catalyzes the reduction of oxygen to water. Electrons originating from reduced cytochrome c in the intermembrane space (IMS) are transferred via the dinuclear copper A center (CU(A)) of subunit 2 and heme A of subunit 1 to the active site in subunit 1, a binuclear center (BNC) formed by heme A3 and copper B (CU(B)). The BNC reduces molecular oxygen to 2 water molecules using 4 electrons from cytochrome c in the IMS and 4 protons from the mitochondrial matrix. The chain is Cytochrome c oxidase subunit 2 (mt:CoII) from Drosophila miranda (Fruit fly).